The chain runs to 281 residues: Sulfur carrier protein FdhD (281 aa).

Catalysis depends on cysteine 127, which acts as the Cysteine persulfide intermediate. 264–269 provides a ligand contact to Mo-bis(molybdopterin guanine dinucleotide); it reads FAREGR.

This sequence belongs to the FdhD family.

Its subcellular location is the cytoplasm. Its function is as follows. Required for formate dehydrogenase (FDH) activity. Acts as a sulfur carrier protein that transfers sulfur from IscS to the molybdenum cofactor prior to its insertion into FDH. This chain is Sulfur carrier protein FdhD, found in Mannheimia succiniciproducens (strain KCTC 0769BP / MBEL55E).